The primary structure comprises 475 residues: Bifunctional protein HldE (475 aa).

The ribokinase stretch occupies residues 1 to 317 (MQYSAQFNRA…ENAIHGRTTA (317 aa)). 194–197 (NMSE) provides a ligand contact to ATP. Aspartate 263 is a catalytic residue. The tract at residues 343–475 (MTNGCFDILH…VIKKIQQLKE (133 aa)) is cytidylyltransferase.

In the N-terminal section; belongs to the carbohydrate kinase PfkB family. It in the C-terminal section; belongs to the cytidylyltransferase family. Homodimer.

The catalysed reaction is D-glycero-beta-D-manno-heptose 7-phosphate + ATP = D-glycero-beta-D-manno-heptose 1,7-bisphosphate + ADP + H(+). The enzyme catalyses D-glycero-beta-D-manno-heptose 1-phosphate + ATP + H(+) = ADP-D-glycero-beta-D-manno-heptose + diphosphate. It participates in nucleotide-sugar biosynthesis; ADP-L-glycero-beta-D-manno-heptose biosynthesis; ADP-L-glycero-beta-D-manno-heptose from D-glycero-beta-D-manno-heptose 7-phosphate: step 1/4. It functions in the pathway nucleotide-sugar biosynthesis; ADP-L-glycero-beta-D-manno-heptose biosynthesis; ADP-L-glycero-beta-D-manno-heptose from D-glycero-beta-D-manno-heptose 7-phosphate: step 3/4. In terms of biological role, catalyzes the phosphorylation of D-glycero-D-manno-heptose 7-phosphate at the C-1 position to selectively form D-glycero-beta-D-manno-heptose-1,7-bisphosphate. Functionally, catalyzes the ADP transfer from ATP to D-glycero-beta-D-manno-heptose 1-phosphate, yielding ADP-D-glycero-beta-D-manno-heptose. This chain is Bifunctional protein HldE, found in Histophilus somni (strain 129Pt) (Haemophilus somnus).